Consider the following 166-residue polypeptide: UPF0178 protein BPUM_2255 (166 aa).

The protein belongs to the UPF0178 family.

The polypeptide is UPF0178 protein BPUM_2255 (Bacillus pumilus (strain SAFR-032)).